The following is a 305-amino-acid chain: NAD kinase (305 aa).

Catalysis depends on Asp-84, which acts as the Proton acceptor. NAD(+)-binding positions include 84–85, 159–160, His-170, Arg-187, Asp-189, 200–205, and Gln-260; these read DG, NE, and TAYSLS.

The protein belongs to the NAD kinase family. A divalent metal cation serves as cofactor.

The protein localises to the cytoplasm. It catalyses the reaction NAD(+) + ATP = ADP + NADP(+) + H(+). Its function is as follows. Involved in the regulation of the intracellular balance of NAD and NADP, and is a key enzyme in the biosynthesis of NADP. Catalyzes specifically the phosphorylation on 2'-hydroxyl of the adenosine moiety of NAD to yield NADP. The chain is NAD kinase from Pasteurella multocida (strain Pm70).